The chain runs to 307 residues: Homoserine kinase (307 aa).

91–101 (PLARGLGSSAA) contacts ATP.

This sequence belongs to the GHMP kinase family. Homoserine kinase subfamily.

The protein resides in the cytoplasm. It catalyses the reaction L-homoserine + ATP = O-phospho-L-homoserine + ADP + H(+). It functions in the pathway amino-acid biosynthesis; L-threonine biosynthesis; L-threonine from L-aspartate: step 4/5. Its function is as follows. Catalyzes the ATP-dependent phosphorylation of L-homoserine to L-homoserine phosphate. This is Homoserine kinase from Deinococcus radiodurans (strain ATCC 13939 / DSM 20539 / JCM 16871 / CCUG 27074 / LMG 4051 / NBRC 15346 / NCIMB 9279 / VKM B-1422 / R1).